Reading from the N-terminus, the 361-residue chain is Velvet complex subunit B (361 aa).

Disordered stretches follow at residues 1–36 (MYAVEDRHHPVPPPLSMDRISAPSVQYPSGTTSLRQ) and 308–340 (NGAPVIEPHQSWPRFSLNPSRSSPPKSSPVLLR). Residues 23 to 35 (PSVQYPSGTTSLR) show a composition bias toward polar residues. Residues 47–353 (QDGRSWSLQV…SASALRYRVS (307 aa)) enclose the Velvet domain. Over residues 323–336 (SLNPSRSSPPKSSP) the composition is skewed to low complexity.

This sequence belongs to the velvet family. VelB subfamily. Component of the heterotrimeric velvet complex composed of laeA, veA and velB; VeA acting as a bridging protein between laeA and velB. Interacts with velA. Forms a heterodimeric complex with vosA; the formation of the velB-vosA complex is light-dependent. Interacts with vosA.

The protein localises to the nucleus. Its subcellular location is the cytoplasm. In terms of biological role, component of the velvet transcription factor complex that controls sexual/asexual developmental ratio in response to light, promoting sexual development in the darkness while stimulating asexual sporulation under illumination. The velvet complex acts as a global regulator for secondary metabolite gene expression. Component of the velB-VosA heterodimeric complex that plays a dual role in activating genes associated with spore maturation and repressing certain development-associated genes. The velB-VosA complex binds DNA through the DNA-binding domain of vosA that recognizes an 11-nucleotide consensus sequence 5'-CTGGCCGCGGC-3' consisting of two motifs in the promoters of key developmental regulatory genes. Controls conidiophore formation. This chain is Velvet complex subunit B, found in Penicillium rubens (strain ATCC 28089 / DSM 1075 / NRRL 1951 / Wisconsin 54-1255) (Penicillium chrysogenum).